The primary structure comprises 311 residues: tRNA dimethylallyltransferase (311 aa).

16–23 contributes to the ATP binding site; sequence GATASGKS. 18 to 23 contributes to the substrate binding site; it reads TASGKS. Interaction with substrate tRNA stretches follow at residues 41–44 and 165–169; these read DSRQ and QRLIR.

It belongs to the IPP transferase family. As to quaternary structure, monomer. Mg(2+) serves as cofactor.

It catalyses the reaction adenosine(37) in tRNA + dimethylallyl diphosphate = N(6)-dimethylallyladenosine(37) in tRNA + diphosphate. Its function is as follows. Catalyzes the transfer of a dimethylallyl group onto the adenine at position 37 in tRNAs that read codons beginning with uridine, leading to the formation of N6-(dimethylallyl)adenosine (i(6)A). The protein is tRNA dimethylallyltransferase of Chlorobium chlorochromatii (strain CaD3).